A 146-amino-acid chain; its full sequence is Snake venom vascular endothelial growth factor toxin (146 aa).

Positions 1-24 (MAAYLLAVAILFCIQGWPLGTVQG) are cleaved as a signal peptide. Glutamine 25 is modified (pyrrolidone carboxylic acid). Intrachain disulfides connect cysteine 38–cysteine 80, cysteine 69–cysteine 115, and cysteine 73–cysteine 117. The tract at residues 118 to 146 (RPRSASGVNSRKHKRNPEEGEQRAKFPFV) is disordered. Basic and acidic residues predominate over residues 133–146 (NPEEGEQRAKFPFV).

Belongs to the PDGF/VEGF growth factor family. Snake venom VEGF subfamily. Homodimer; disulfide-linked. Interacts with VEGF receptor-1 (FLT1) with a high affinity, whereas it binds to VEGF receptor-2 (KDR) with a low affinity. Does not bind VEGF receptor-3 (FLT4). Expressed by the venom gland.

It localises to the secreted. Functionally, snake venom VEGFs that may contribute to venom dispersion and prey subjugation by inducing vascular permeability and hypotension. This protein induces an increase in capillary permeability after intradermal injection, as well as a drastic hypotensive effect after intravenous injection. The hypotension is mediated by nitric oxide (NO), which is produced by VEGF-activated endothelium NO synthase. Also induces angiogenesis in vitro. Like other crotalid VEGFs, this protein interacts with VEGF receptor-1 (FLT1) with a high affinity, whereas it binds to VEGF receptor-2 (KDR) with a low affinity. The polypeptide is Snake venom vascular endothelial growth factor toxin (Bothrops erythromelas (Caatinga lance head)).